An 808-amino-acid chain; its full sequence is Sucrose synthase 1 (808 aa).

The tract at residues 277-754 is GT-B glycosyltransferase; it reads MVFNVVILSP…GLQRIEEKYT (478 aa).

The protein belongs to the glycosyltransferase 1 family. Plant sucrose synthase subfamily. In terms of assembly, homotetramer. Expressed in the phloem of leaves and in roots. Detected in the whole plant but more precisely confined to the vasculature in cotyledons, mature leaves and siliques.

It catalyses the reaction an NDP-alpha-D-glucose + D-fructose = a ribonucleoside 5'-diphosphate + sucrose + H(+). In terms of biological role, sucrose-cleaving enzyme that provides UDP-glucose and fructose for various metabolic pathways. The protein is Sucrose synthase 1 (SUS1) of Arabidopsis thaliana (Mouse-ear cress).